The chain runs to 115 residues: T cell receptor beta variable 7-6 (115 aa).

An N-terminal signal peptide occupies residues 1-21; sequence MGTSLLCWVVLGFLGTDHTGA. In terms of domain architecture, Ig-like spans 22-115; it reads GVSQSPRYKV…SAMYRCASSL (94 aa). The cysteines at positions 42 and 111 are disulfide-linked.

Alpha-beta TR is a heterodimer composed of an alpha and beta chain; disulfide-linked. The alpha-beta TR is associated with the transmembrane signaling CD3 coreceptor proteins to form the TR-CD3 (TcR or TCR). The assembly of alpha-beta TR heterodimers with CD3 occurs in the endoplasmic reticulum where a single alpha-beta TR heterodimer associates with one CD3D-CD3E heterodimer, one CD3G-CD3E heterodimer and one CD247 homodimer forming a stable octameric structure. CD3D-CD3E and CD3G-CD3E heterodimers preferentially associate with TR alpha and TR beta chains, respectively. The association of the CD247 homodimer is the last step of TcR assembly in the endoplasmic reticulum and is required for transport to the cell surface.

Its subcellular location is the cell membrane. V region of the variable domain of T cell receptor (TR) beta chain that participates in the antigen recognition. Alpha-beta T cell receptors are antigen specific receptors which are essential to the immune response and are present on the cell surface of T lymphocytes. Recognize peptide-major histocompatibility (MH) (pMH) complexes that are displayed by antigen presenting cells (APC), a prerequisite for efficient T cell adaptive immunity against pathogens. Binding of alpha-beta TR to pMH complex initiates TR-CD3 clustering on the cell surface and intracellular activation of LCK that phosphorylates the ITAM motifs of CD3G, CD3D, CD3E and CD247 enabling the recruitment of ZAP70. In turn ZAP70 phosphorylates LAT, which recruits numerous signaling molecules to form the LAT signalosome. The LAT signalosome propagates signal branching to three major signaling pathways, the calcium, the mitogen-activated protein kinase (MAPK) kinase and the nuclear factor NF-kappa-B (NF-kB) pathways, leading to the mobilization of transcription factors that are critical for gene expression and essential for T cell growth and differentiation. The T cell repertoire is generated in the thymus, by V-(D)-J rearrangement. This repertoire is then shaped by intrathymic selection events to generate a peripheral T cell pool of self-MH restricted, non-autoaggressive T cells. Post-thymic interaction of alpha-beta TR with the pMH complexes shapes TR structural and functional avidity. The polypeptide is T cell receptor beta variable 7-6 (Homo sapiens (Human)).